The primary structure comprises 363 residues: Phosphoserine aminotransferase (363 aa).

R42 lines the L-glutamate pocket. Pyridoxal 5'-phosphate-binding positions include 76–77, W102, T156, D175, and Q198; that span reads GR. K199 carries the N6-(pyridoxal phosphate)lysine modification. 240-241 contacts pyridoxal 5'-phosphate; the sequence is NT.

This sequence belongs to the class-V pyridoxal-phosphate-dependent aminotransferase family. SerC subfamily. In terms of assembly, homodimer. The cofactor is pyridoxal 5'-phosphate.

The protein resides in the cytoplasm. The catalysed reaction is O-phospho-L-serine + 2-oxoglutarate = 3-phosphooxypyruvate + L-glutamate. It catalyses the reaction 4-(phosphooxy)-L-threonine + 2-oxoglutarate = (R)-3-hydroxy-2-oxo-4-phosphooxybutanoate + L-glutamate. It functions in the pathway amino-acid biosynthesis; L-serine biosynthesis; L-serine from 3-phospho-D-glycerate: step 2/3. The protein operates within cofactor biosynthesis; pyridoxine 5'-phosphate biosynthesis; pyridoxine 5'-phosphate from D-erythrose 4-phosphate: step 3/5. In terms of biological role, catalyzes the reversible conversion of 3-phosphohydroxypyruvate to phosphoserine and of 3-hydroxy-2-oxo-4-phosphonooxybutanoate to phosphohydroxythreonine. This is Phosphoserine aminotransferase from Shewanella baltica (strain OS155 / ATCC BAA-1091).